A 367-amino-acid chain; its full sequence is Aflatoxin B1 aldehyde reductase member 2 (367 aa).

Residues 1 to 46 constitute a mitochondrion transit peptide; that stretch reads MLRAVSRAVSRAAVRCAWRSGPSVARPLAMSRSPAPRAVSGAPLRP. The segment at 27–46 is disordered; the sequence is PLAMSRSPAPRAVSGAPLRP. Ser40 is subject to Phosphoserine. Thr48 bears the Phosphothreonine mark. Asp80 serves as a coordination point for NADP(+). Tyr85 functions as the Proton donor in the catalytic mechanism. Residue Lys136 is modified to N6-acetyllysine. Residue His149 participates in substrate binding. NADP(+) contacts are provided by residues 179–180, Gln205, 234–244, and Arg258; these read SN and NPLAGGLLTGK. Lys244 is subject to N6-succinyllysine. At Ser263 the chain carries Phosphoserine. Residues Tyr268 and Arg271 each coordinate substrate. 326 to 334 contacts NADP(+); it reads SSLEQLEQN. Arg367 contacts substrate.

It belongs to the aldo/keto reductase family. Aldo/keto reductase 2 subfamily. In terms of assembly, homodimer. Heterodimer with AKR7A1.

Its subcellular location is the mitochondrion. The protein localises to the golgi apparatus. The protein resides in the golgi stack. It is found in the cytoplasm. The enzyme catalyses 4-hydroxybutanoate + NADP(+) = succinate semialdehyde + NADPH + H(+). Catalyzes the NADPH-dependent reduction of succinic semialdehyde to gamma-hydroxybutyrate. May have an important role in producing the neuromodulator gamma-hydroxybutyrate (GHB). Has broad substrate specificity. Can reduce the dialdehyde protein-binding form of aflatoxin B1 (AFB1) to the non-binding AFB1 dialcohol. Acts as a 2-carboxybenzaldehyde reductase. The protein is Aflatoxin B1 aldehyde reductase member 2 (Akr7a2) of Rattus norvegicus (Rat).